The primary structure comprises 106 residues: Ribonuclease P protein component 4 (106 aa).

Zn(2+) is bound by residues C63, C66, C89, and C92.

This sequence belongs to the eukaryotic/archaeal RNase P protein component 4 family. In terms of assembly, consists of a catalytic RNA component and at least 4-5 protein subunits. The cofactor is Zn(2+).

Its subcellular location is the cytoplasm. It catalyses the reaction Endonucleolytic cleavage of RNA, removing 5'-extranucleotides from tRNA precursor.. Part of ribonuclease P, a protein complex that generates mature tRNA molecules by cleaving their 5'-ends. This chain is Ribonuclease P protein component 4, found in Methanosphaerula palustris (strain ATCC BAA-1556 / DSM 19958 / E1-9c).